The following is a 464-amino-acid chain: 3-isopropylmalate dehydratase large subunit (464 aa).

The [4Fe-4S] cluster site is built by Cys337, Cys397, and Cys400.

It belongs to the aconitase/IPM isomerase family. LeuC type 1 subfamily. Heterodimer of LeuC and LeuD. The cofactor is [4Fe-4S] cluster.

The catalysed reaction is (2R,3S)-3-isopropylmalate = (2S)-2-isopropylmalate. It functions in the pathway amino-acid biosynthesis; L-leucine biosynthesis; L-leucine from 3-methyl-2-oxobutanoate: step 2/4. Catalyzes the isomerization between 2-isopropylmalate and 3-isopropylmalate, via the formation of 2-isopropylmaleate. The protein is 3-isopropylmalate dehydratase large subunit of Bacillus thuringiensis subsp. konkukian (strain 97-27).